We begin with the raw amino-acid sequence, 195 residues long: MGEIKLIVGLANPGAEYAQTRHNAGAWYVEELARICGVSLVPDSKYFGLTARAVLHGKDVRLLIPTTYMNLSGKAVGALANFFRITPEEILVAHDELDMPPGVAKFKLGGGHGGHNGLKDIIAKLANDKNFYRLRIGIGHPGDKNKVSGYVLGKAPAKEQELINAAVDEAVRSTEVLFKEDMVKAMTRLHSFKAE.

Tyr-17 serves as a coordination point for tRNA. His-22 functions as the Proton acceptor in the catalytic mechanism. TRNA is bound by residues Tyr-68, Asn-70, and Asn-116.

This sequence belongs to the PTH family. Monomer.

It localises to the cytoplasm. The catalysed reaction is an N-acyl-L-alpha-aminoacyl-tRNA + H2O = an N-acyl-L-amino acid + a tRNA + H(+). Functionally, hydrolyzes ribosome-free peptidyl-tRNAs (with 1 or more amino acids incorporated), which drop off the ribosome during protein synthesis, or as a result of ribosome stalling. Its function is as follows. Catalyzes the release of premature peptidyl moieties from peptidyl-tRNA molecules trapped in stalled 50S ribosomal subunits, and thus maintains levels of free tRNAs and 50S ribosomes. This is Peptidyl-tRNA hydrolase from Shewanella sp. (strain ANA-3).